We begin with the raw amino-acid sequence, 666 residues long: MQHVNHSSFDKASKAGFIIALGIVYGDIGTSPLYTMQSLVENQGGISSVTESFILGSISLIIWTLTLITTIKYVLVALKADNHHEGGIFSLYTLVRKMTPWLIVPAVIGGATLLSDGALTPAVTVTSAVEGLKVVPSLQHIFQNQSNVIFATLFILLLLFAIQRFGTGVIGKLFGPIMFIWFAFLGISGLLNSFAHPEVFKAINPYYGLKLLFSPENHKGIFILGSIFLATTGAEALYSDLGHVGRGNIHVSWPFVKVAIILSYCGQGAWILANKNAGNELNPFFASIPSQFTMHVVILATLAAIIASQALISGSFTLVSEAMRLKIFPQFRSTYPGDNIGQTYIPVINWFLFAITTSIVLLFKTSAHMEAAYGLAITITMLMTTILLSFFLIQKGVKRGLVLLMMIFFGILEGIFFLASAVKFMHGGYVVVIIAVAIIFIMIIWYKGSKIVSRYVKLLDLKDYIGQLDKLRHDHRYPIYHTNVVYLTNRMEGDMIDKSIMYSILDKRPKKAQVYWFVNIKVTDEPYTAEYKVDMMGTDFIVKVELYLGFKMRQTVSRYLRTIVEELLESGRLPKQGKTYSVRPDSKVGDFRFIVLDERFSSSQNLKPGERFVMLMKSSVKHWTATPIRWFGLQFSEVTTEVVPLIFTANRGLPIKEKIELTTTGD.

The next 12 membrane-spanning stretches (helical) occupy residues 16–36, 58–78, 99–119, 141–161, 167–187, 221–241, 253–273, 292–312, 343–363, 373–393, 402–422, and 424–444; these read GFII…LYTM, ISLI…LVAL, TPWL…DGAL, IFQN…LLFA, TGVI…FLGI, IFIL…YSDL, WPFV…WILA, FTMH…QALI, TYIP…VLLF, YGLA…FFLI, VLLM…ASAV, and FMHG…IMII.

The protein belongs to the HAK/KUP transporter (TC 2.A.72) family.

Its subcellular location is the cell membrane. The enzyme catalyses K(+)(in) + H(+)(in) = K(+)(out) + H(+)(out). In terms of biological role, transport of potassium into the cell. Likely operates as a K(+):H(+) symporter. The chain is Probable potassium transport system protein Kup from Streptococcus agalactiae serotype III (strain NEM316).